We begin with the raw amino-acid sequence, 523 residues long: 3-hydroxybenzoate--CoA ligase (523 aa).

Belongs to the ATP-dependent AMP-binding enzyme family. Benzoate-CoA ligase subfamily.

It carries out the reaction 3-hydroxybenzoate + ATP + CoA = 3-hydroxybenzoyl-CoA + AMP + diphosphate. The enzyme catalyses 4-hydroxybenzoate + ATP + CoA = 4-hydroxybenzoyl-CoA + AMP + diphosphate. Its function is as follows. Ligase involved in the anaerobic degradation of 3-hydroxybenzoate (3OHBz). Catalyzes the activation of 3-hydroxybenzoate to 3-hydroxybenzoyl-CoA. Also shows high activity with protocatechuate and 4-hydroxybenzoate. Exhibits lower activity with benzoate, but cannot use 2-hydroxybenzoate or benzoate analogs containing other substituents at the ortho position, such as 2-aminobenzoate (anthranilate). This is 3-hydroxybenzoate--CoA ligase from Aromatoleum sp. (strain CIB) (Azoarcus sp. (strain CIB)).